A 1151-amino-acid chain; its full sequence is uncharacterized protein (1151 aa).

Disordered stretches follow at residues 611 to 633, 709 to 740, 753 to 778, 795 to 880, and 1060 to 1151; these read FVKGDRSDSGGGPPPPPPPDEEE, NLVPVGESPMSAPDIDLPIPGLPGPQPQIMEV, PPILPIQPPLPLPAPPTPQEPPKSIL, PPVI…PPKL, and LKEP…TQQE. 2 stretches are compositionally biased toward pro residues: residues 754-773 and 811-842; these read PILPIQPPLPLPAPPTPQEP and IVPPSPAVVSPPSPTTIPQEPPTQPSPIPSQP. Over residues 867–878 the composition is skewed to low complexity; it reads PITPDTPAITPP. A compositionally biased stretch (acidic residues) spans 1082-1091; it reads ESDNEDDELD. The segment covering 1131 to 1142 has biased composition (polar residues); the sequence is PVDTSDATKIST.

This is an uncharacterized protein from Ostreid herpesvirus 1 (isolate France) (OsHV-1).